The sequence spans 150 residues: Large ribosomal subunit protein uL15 (150 aa).

A compositionally biased stretch (polar residues) spans 1–15 (MNLSNLQPAEGSTHN). Residues 1 to 52 (MNLSNLQPAEGSTHNQNKRLGRGEGSGKGGTSARGHKGAKSRSGYSKKIGFE) are disordered. Residues 23-32 (GEGSGKGGTS) show a composition bias toward gly residues.

This sequence belongs to the universal ribosomal protein uL15 family. Part of the 50S ribosomal subunit.

Its function is as follows. Binds to the 23S rRNA. The chain is Large ribosomal subunit protein uL15 from Flavobacterium psychrophilum (strain ATCC 49511 / DSM 21280 / CIP 103535 / JIP02/86).